A 138-amino-acid polypeptide reads, in one-letter code: AKVSRKPREPRTAVTQSTRRIKRKKTLSKPRSRGGVKAPKTTMKIKRALRRNLRRKIQTSAGQPKKAKKARKHFVSYYVLKKSGQNKKTNQNKRQNQNKRQNQNKRRGQPVPEQEIMEKPTTSCKWCSQGVTRRGRRY.

Residues Ala-1–Arg-11 show a composition bias toward basic and acidic residues. The interval Ala-1–Tyr-138 is disordered. Residue Ser-4 is modified to Phosphoserine; by PKC. Residues Arg-5–Arg-23 carry the Nuclear localization signal motif. Basic residues-rich tracts occupy residues Arg-19 to Gly-34, Met-43 to Ile-57, and Lys-65 to Phe-74. The residue at position 26 (Thr-26) is a Phosphothreonine; by PKA. Residues Arg-54–Lys-72 carry the Nuclear localization signal motif. Positions Asn-86–Gln-101 are enriched in low complexity. A compositionally biased stretch (polar residues) spans Pro-120–Val-131.

The protein resides in the nucleus. Its subcellular location is the chromosome. Its function is as follows. Involved in nuclear basic protein transition: histones are replaced by spermatid specific proteins which are themselves replaced by protamines in late spermatids. The sequence is that of Spermatid nuclear transition protein 4 (TNP4) from Sus scrofa (Pig).